The primary structure comprises 68 residues: Glu S.griseus protease inhibitor (68 aa).

Ser-1 is modified (N-acetylserine). A disulfide bridge connects residues Cys-3 and Cys-48.

Belongs to the protease inhibitor I13 (potato type I serine protease inhibitor) family.

Competitively inhibits Glu S.griseus protease by forming probably a 1:1 complex. BGIA has no inhibitory activity against 2 other acidic amino acid-specific endopeptidases (S.aureus protease V8 and B.subtilis proteinase), chymotrypsin, trypsin, pancreatic elastase, and papain, although subtilisin Carlsberg was strongly inhibited. The sequence is that of Glu S.griseus protease inhibitor from Momordica charantia (Bitter gourd).